We begin with the raw amino-acid sequence, 213 residues long: Thymidylate kinase (213 aa).

Position 10 to 17 (10 to 17) interacts with ATP; it reads GLEGAGKT.

This sequence belongs to the thymidylate kinase family.

It carries out the reaction dTMP + ATP = dTDP + ADP. In terms of biological role, phosphorylation of dTMP to form dTDP in both de novo and salvage pathways of dTTP synthesis. In Salmonella dublin (strain CT_02021853), this protein is Thymidylate kinase.